We begin with the raw amino-acid sequence, 305 residues long: Olfactory receptor 4F4 (305 aa).

The Extracellular portion of the chain corresponds to 1–18 (MVTEFIFLGLSDSQELQT). A helical transmembrane segment spans residues 19 to 42 (FLFMLFFVFYGGIVFGNLLIVITV). The Cytoplasmic segment spans residues 43 to 50 (VSDSHLHS). A helical transmembrane segment spans residues 51–72 (PMYFLLANLSLIDLSLSSVTAP). Topologically, residues 73 to 93 (KMITDFFSQRKVISFKGCLVQ) are extracellular. A disulfide bridge links Cys90 with Cys182. A helical transmembrane segment spans residues 94–113 (IFLLHFFGGSEMVILIAMGF). Over 114 to 132 (DRYIAICKPLHYTTIMCGN) the chain is Cytoplasmic. The chain crosses the membrane as a helical span at residues 133 to 151 (ACVGIMAVAWGIGFLHSVS). The Extracellular segment spans residues 152-188 (QLAFAVHLPFCGPNEVDSFYCDLPRVIKLACTDTYRL). The chain crosses the membrane as a helical span at residues 189–212 (DIMVIANSGVLTVCSFVLLIISYT). Residues 213–228 (IILMTIQHCPLDKSSK) are Cytoplasmic-facing. A helical membrane pass occupies residues 229-251 (ALSTLTAHITVVLLFFGPCVFIY). Over 252 to 262 (AWPFPIKSLDK) the chain is Extracellular. The helical transmembrane segment at 263–282 (FLAVFYSVITPLLNPIIYTL) threads the bilayer. The Cytoplasmic portion of the chain corresponds to 283-305 (RNKDMKTAIRRLRKWDAHSSVKF).

Belongs to the G-protein coupled receptor 1 family.

It is found in the cell membrane. Functionally, odorant receptor. The chain is Olfactory receptor 4F4 (OR4F4) from Homo sapiens (Human).